The sequence spans 1397 residues: DNA-directed RNA polymerase subunit beta' (1397 aa).

Zn(2+) contacts are provided by Cys-75, Cys-77, Cys-90, and Cys-93. Mg(2+) contacts are provided by Asp-465, Asp-467, and Asp-469. Residues Cys-819, Cys-893, Cys-900, and Cys-903 each contribute to the Zn(2+) site.

This sequence belongs to the RNA polymerase beta' chain family. The RNAP catalytic core consists of 2 alpha, 1 beta, 1 beta' and 1 omega subunit. When a sigma factor is associated with the core the holoenzyme is formed, which can initiate transcription. Requires Mg(2+) as cofactor. The cofactor is Zn(2+).

The enzyme catalyses RNA(n) + a ribonucleoside 5'-triphosphate = RNA(n+1) + diphosphate. DNA-dependent RNA polymerase catalyzes the transcription of DNA into RNA using the four ribonucleoside triphosphates as substrates. This is DNA-directed RNA polymerase subunit beta' from Acinetobacter baumannii (strain ACICU).